We begin with the raw amino-acid sequence, 406 residues long: UPF0761 membrane protein NMB0524 (406 aa).

6 helical membrane passes run 43–63 (LLAL…FPVF), 100–120 (LTAI…RTID), 139–159 (FLVY…GISF), 176–196 (WSGA…LWGL), 210–230 (AFVG…LFTW), and 248–268 (VPFF…GAVL).

Belongs to the UPF0761 family.

Its subcellular location is the cell inner membrane. In Neisseria meningitidis serogroup B (strain ATCC BAA-335 / MC58), this protein is UPF0761 membrane protein NMB0524.